Consider the following 136-residue polypeptide: MAGAGSAAVSGAGTPVAGPTGRDLFAEGLLEFLRPAVQQLDSHVHAVRESQVELREQIDNLATELCRINEDQKVALDLDPYVKKLLNARRRVVLVNNILQNAQERLRRLNHSVAKETARRRAMLDSGIYPPGSPGK.

N-acetylalanine is present on alanine 2. Serine 10 bears the Phosphoserine mark. Threonine 14 bears the Phosphothreonine mark. Residues valine 37–serine 126 adopt a coiled-coil conformation. Phosphoserine; by PKA is present on serine 50. Positions lysine 83 to lysine 136 are interaction with TOR1A. Residue serine 126 is modified to Phosphoserine. Tyrosine 129 carries the post-translational modification Phosphotyrosine. Serine 133 carries the post-translational modification Phosphoserine.

It belongs to the SNAPIN family. Component of the biogenesis of lysosome-related organelles complex 1 (BLOC-1) composed of BLOC1S1, BLOC1S2, BLOC1S3, BLOC1S4, BLOC1S5, BLOC1S6, DTNBP1/BLOC1S7 and SNAPIN/BLOC1S8. Octamer composed of one copy each BLOC1S1, BLOC1S2, BLOC1S3, BLOC1S4, BLOC1S5, BLOC1S6, DTNBP1/BLOC1S7 and SNAPIN/BLOC1S8. The BLOC-1 complex associates with the AP-3 protein complex and membrane protein cargos. Component of the BLOC-one-related complex (BORC) which is composed of BLOC1S1, BLOC1S2, BORCS5, BORCS6, BORCS7, BORCS8, KXD1 and SNAPIN. Associates with the SNARE complex. Interacts with CSNK1D, SNAP23 and STX4A but not with STX1A, VAMP2 and SYT1. Interacts with SNAP25; the interaction with SNAP25 is increased by its phosphorylation. Interacts with CNTRL, NANOS1, PUM2 and RGS7. Interacts with TOR1A; the interaction is direct and associates SNAPIN with the CSN complex. As to quaternary structure, (Microbial infection) Interacts with human cytomegalovirus/HHV-5 protein UL70. Post-translationally, phosphorylated by CSNK1D/CK1. Phosphorylated by PKD, phosphorylation controls SNAPIN protein stability. As to expression, expressed in male germ cells of adult testis (at protein level).

The protein localises to the membrane. It localises to the cytoplasm. It is found in the cytosol. The protein resides in the perinuclear region. Its subcellular location is the golgi apparatus membrane. The protein localises to the lysosome membrane. It localises to the cytoplasmic vesicle. It is found in the secretory vesicle. The protein resides in the synaptic vesicle membrane. Component of the BLOC-1 complex, a complex that is required for normal biogenesis of lysosome-related organelles (LRO), such as platelet dense granules and melanosomes. In concert with the AP-3 complex, the BLOC-1 complex is required to target membrane protein cargos into vesicles assembled at cell bodies for delivery into neurites and nerve terminals. The BLOC-1 complex, in association with SNARE proteins, is also proposed to be involved in neurite extension. Plays a role in intracellular vesicle trafficking and synaptic vesicle recycling. May modulate a step between vesicle priming, fusion and calcium-dependent neurotransmitter release through its ability to potentiate the interaction of synaptotagmin with the SNAREs and the plasma-membrane-associated protein SNAP25. Its phosphorylation state influences exocytotic protein interactions and may regulate synaptic vesicle exocytosis. May also have a role in the mechanisms of SNARE-mediated membrane fusion in non-neuronal cells. As part of the BORC complex may play a role in lysosomes movement and localization at the cell periphery. Associated with the cytosolic face of lysosomes, the BORC complex may recruit ARL8B and couple lysosomes to microtubule plus-end-directed kinesin motor. The polypeptide is SNARE-associated protein Snapin (SNAPIN) (Homo sapiens (Human)).